The chain runs to 583 residues: MPNTHTQHVQISEPNPVNTLSTPSKRGHRHRRSLAISGDFDFLKQPAAIVNLPPPQAAENCPSTAPTAVSSTLSPIRYNRFPCKTNEDAGTLDLPEPRFYPLSPKNNLQTPSPRFFISEEPSFSSPVKGVPDAIINLDDALKTRPRSFKSHRRSESAPPDLEVMVDKGNCAAGSNSMIKEEEDSLIEPESKNEYYEQKLPTALLSPLRPSLCVSEQAIDVDDSALNGSPTHHNHGMQNANARNSNTFNSLKIKGQKQRYYHYTKQLPLTVGCDSQSPKEQRSAASMTINQAMTPSSLAYTPSKLASTPATPVSFYDSNADINLESDNFPLKDNPRYAKDGYPKKCGNSQLNRVLDSDKRQDFSGESRRRRSGSPISHMQHRNLIDNMKGRRNSNTINSIFNYKSQHYEMPYDDMMKNENINAQSMPFSVNGVNNENSIGGVITRADDAPLQHSVVKSCTPDGKEEMNRLKSNDSNEYSKSEGQIRTNSQLSKDILMGEPGDMVDLSSFVNAQRKASNETGDLVFSLSQDDDALKTFHASNSAATSNESWCISDDALGKQAQDSEVRRKRKSKLGLFRHIFSRK.

Over residues 1 to 24 the composition is skewed to polar residues; that stretch reads MPNTHTQHVQISEPNPVNTLSTPS. 2 disordered regions span residues 1–31 and 330–380; these read MPNT…HRHR and LKDN…HMQH. Basic and acidic residues-rich tracts occupy residues 332–342 and 354–366; these read DNPRYAKDGYP and LDSD…SGES. Phosphoserine is present on residues Ser393 and Ser398. Residues 457–486 form a disordered region; it reads SCTPDGKEEMNRLKSNDSNEYSKSEGQIRT. Over residues 461-479 the composition is skewed to basic and acidic residues; that stretch reads DGKEEMNRLKSNDSNEYSK. Phosphoserine is present on residues Ser516 and Ser552.

Post-translationally, phosphorylated by CDC28/CDK1.

In terms of biological role, overexpression affects chitinase expression, cell separation and budding pattern, and increases trehalose accumulation and heat resistance by inhibiting protein kinase CBK1. Overexpression also suppresses temperature-induced hyperosmosensitivity and sensitivity to cell wall degrading enzymes. Overexpression of both LRE1 and PBN1 confers resistance to laminarinase. This Saccharomyces cerevisiae (strain ATCC 204508 / S288c) (Baker's yeast) protein is Laminarase-resistance protein LRE1 (LRE1).